Here is a 102-residue protein sequence, read N- to C-terminus: Large ribosomal subunit protein bL21 (102 aa).

This sequence belongs to the bacterial ribosomal protein bL21 family. In terms of assembly, part of the 50S ribosomal subunit. Contacts protein L20.

Its function is as follows. This protein binds to 23S rRNA in the presence of protein L20. The protein is Large ribosomal subunit protein bL21 of Leptospira biflexa serovar Patoc (strain Patoc 1 / Ames).